The sequence spans 361 residues: Phosphoserine aminotransferase (361 aa).

R42 provides a ligand contact to L-glutamate. Pyridoxal 5'-phosphate contacts are provided by residues A76–T77, W102, T152, D172, and Q195. N6-(pyridoxal phosphate)lysine is present on K196. Residue N237 to T238 participates in pyridoxal 5'-phosphate binding.

The protein belongs to the class-V pyridoxal-phosphate-dependent aminotransferase family. SerC subfamily. As to quaternary structure, homodimer. Pyridoxal 5'-phosphate serves as cofactor.

The protein localises to the cytoplasm. It catalyses the reaction O-phospho-L-serine + 2-oxoglutarate = 3-phosphooxypyruvate + L-glutamate. The catalysed reaction is 4-(phosphooxy)-L-threonine + 2-oxoglutarate = (R)-3-hydroxy-2-oxo-4-phosphooxybutanoate + L-glutamate. The protein operates within amino-acid biosynthesis; L-serine biosynthesis; L-serine from 3-phospho-D-glycerate: step 2/3. It functions in the pathway cofactor biosynthesis; pyridoxine 5'-phosphate biosynthesis; pyridoxine 5'-phosphate from D-erythrose 4-phosphate: step 3/5. Catalyzes the reversible conversion of 3-phosphohydroxypyruvate to phosphoserine and of 3-hydroxy-2-oxo-4-phosphonooxybutanoate to phosphohydroxythreonine. The polypeptide is Phosphoserine aminotransferase (Xanthomonas oryzae pv. oryzae (strain MAFF 311018)).